A 150-amino-acid chain; its full sequence is Small ribosomal subunit protein uS11z (150 aa).

The residue at position 19 (S19) is a Phosphoserine.

It belongs to the universal ribosomal protein uS11 family. Interacts with AAK6.

The protein resides in the cytoplasm. The sequence is that of Small ribosomal subunit protein uS11z (RPS14A) from Arabidopsis thaliana (Mouse-ear cress).